A 413-amino-acid polypeptide reads, in one-letter code: Putative F-box protein At3g23970 (413 aa).

Positions 1-42 (MNIPPELTFEVLVRLPLKSLARFRSVRKEWKLVIDSEFFRDC) constitute an F-box domain.

The polypeptide is Putative F-box protein At3g23970 (Arabidopsis thaliana (Mouse-ear cress)).